Here is a 408-residue protein sequence, read N- to C-terminus: Argininosuccinate synthase (408 aa).

ATP-binding positions include 10 to 18 and Ala37; that span reads AYSGGLDTS. L-citrulline contacts are provided by Tyr90 and Ser95. Gly120 provides a ligand contact to ATP. The L-aspartate site is built by Thr122, Asn126, and Asp127. Asn126 contacts L-citrulline. L-citrulline-binding residues include Arg130, Ser181, Ser190, Glu266, and Tyr278.

It belongs to the argininosuccinate synthase family. Type 1 subfamily. As to quaternary structure, homotetramer.

Its subcellular location is the cytoplasm. It carries out the reaction L-citrulline + L-aspartate + ATP = 2-(N(omega)-L-arginino)succinate + AMP + diphosphate + H(+). It functions in the pathway amino-acid biosynthesis; L-arginine biosynthesis; L-arginine from L-ornithine and carbamoyl phosphate: step 2/3. The chain is Argininosuccinate synthase from Cereibacter sphaeroides (strain ATCC 17029 / ATH 2.4.9) (Rhodobacter sphaeroides).